A 76-amino-acid polypeptide reads, in one-letter code: Large ribosomal subunit protein bL31 (76 aa).

It belongs to the bacterial ribosomal protein bL31 family. Type A subfamily. In terms of assembly, part of the 50S ribosomal subunit.

Functionally, binds the 23S rRNA. This chain is Large ribosomal subunit protein bL31 (rpmE), found in Pelagibacter ubique (strain HTCC1062).